The sequence spans 299 residues: Urease accessory protein UreD (299 aa).

This sequence belongs to the UreD family. UreD, UreF and UreG form a complex that acts as a GTP-hydrolysis-dependent molecular chaperone, activating the urease apoprotein by helping to assemble the nickel containing metallocenter of UreC. The UreE protein probably delivers the nickel.

It localises to the cytoplasm. Its function is as follows. Required for maturation of urease via the functional incorporation of the urease nickel metallocenter. This Haloarcula marismortui (strain ATCC 43049 / DSM 3752 / JCM 8966 / VKM B-1809) (Halobacterium marismortui) protein is Urease accessory protein UreD.